Consider the following 493-residue polypeptide: Glutamyl-tRNA(Gln) amidotransferase subunit A (493 aa).

Catalysis depends on charge relay system residues K79 and S159. S183 (acyl-ester intermediate) is an active-site residue.

It belongs to the amidase family. GatA subfamily. In terms of assembly, heterotrimer of A, B and C subunits.

The catalysed reaction is L-glutamyl-tRNA(Gln) + L-glutamine + ATP + H2O = L-glutaminyl-tRNA(Gln) + L-glutamate + ADP + phosphate + H(+). Functionally, allows the formation of correctly charged Gln-tRNA(Gln) through the transamidation of misacylated Glu-tRNA(Gln) in organisms which lack glutaminyl-tRNA synthetase. The reaction takes place in the presence of glutamine and ATP through an activated gamma-phospho-Glu-tRNA(Gln). The protein is Glutamyl-tRNA(Gln) amidotransferase subunit A of Sinorhizobium medicae (strain WSM419) (Ensifer medicae).